Reading from the N-terminus, the 808-residue chain is Protein translocase subunit SecA (808 aa).

ATP-binding positions include Gln-87, 105-109 (GEGKT), and Asp-493.

The protein belongs to the SecA family. Monomer and homodimer. Part of the essential Sec protein translocation apparatus which comprises SecA, SecYEG and auxiliary proteins SecDF. Other proteins may also be involved.

The protein resides in the cell membrane. Its subcellular location is the cytoplasm. The catalysed reaction is ATP + H2O + cellular proteinSide 1 = ADP + phosphate + cellular proteinSide 2.. Functionally, part of the Sec protein translocase complex. Interacts with the SecYEG preprotein conducting channel. Has a central role in coupling the hydrolysis of ATP to the transfer of proteins into and across the cell membrane, serving as an ATP-driven molecular motor driving the stepwise translocation of polypeptide chains across the membrane. In Mycoplasma pneumoniae (strain ATCC 29342 / M129 / Subtype 1) (Mycoplasmoides pneumoniae), this protein is Protein translocase subunit SecA.